A 185-amino-acid chain; its full sequence is Pro-adrenomedullin (185 aa).

A signal peptide spans 1–21 (MKLVSIALMLLGSLAVLGADT). Arg41 carries the post-translational modification Arginine amide. A propeptide spanning residues 45 to 91 (ELQASSSYPTGLVDEKTVPTQTLGLQDKQSTSSTPQASTQSTAHIRV) is cleaved from the precursor. The disordered stretch occupies residues 68–89 (GLQDKQSTSSTPQASTQSTAHI). Low complexity predominate over residues 73 to 87 (QSTSSTPQASTQSTA). A disulfide bridge links Cys107 with Cys112. A disordered region spans residues 125–185 (TDKDKDGMAP…HQDISRVSRL (61 aa)). Tyr143 is subject to Tyrosine amide. The propeptide at 150–185 (SLPEVLRARTVESSQEQTHSAPASPAHQDISRVSRL) is preproAM C-terminal fragment. Residues 160-170 (VESSQEQTHSA) are compositionally biased toward polar residues.

It belongs to the adrenomedullin family. In terms of tissue distribution, expressed in adrenal glands, lung, kidney, heart, spleen, duodenum and submandibular glands.

The protein localises to the secreted. In terms of biological role, adrenomedullin/ADM and proadrenomedullin N-20 terminal peptide/PAMP are peptide hormones that act as potent hypotensive and vasodilatator agents. Numerous actions have been reported most related to the physiologic control of fluid and electrolyte homeostasis. Its function is as follows. ADM function is mediated by the CALCRL-RAMP2 and CALCRL-RAMP3 receptor complexes with ADM showing the highest potency for the CALCRL-RAMP2 complex. This Rattus norvegicus (Rat) protein is Pro-adrenomedullin.